The following is a 393-amino-acid chain: Dihydrolipoyllysine-residue succinyltransferase component of 2-oxoglutarate dehydrogenase complex (393 aa).

The 76-residue stretch at 3-78 (RINILVPDLP…KSNQILGNIV (76 aa)) folds into the Lipoyl-binding domain. An N6-lipoyllysine modification is found at Lys44. Residues His364 and Asp368 contribute to the active site.

It belongs to the 2-oxoacid dehydrogenase family. Forms a 24-polypeptide structural core with octahedral symmetry. Part of the 2-oxoglutarate dehydrogenase (OGDH) complex composed of E1 (2-oxoglutarate dehydrogenase), E2 (dihydrolipoamide succinyltransferase) and E3 (dihydrolipoamide dehydrogenase); the complex contains multiple copies of the three enzymatic components (E1, E2 and E3). Requires (R)-lipoate as cofactor.

The enzyme catalyses N(6)-[(R)-dihydrolipoyl]-L-lysyl-[protein] + succinyl-CoA = N(6)-[(R)-S(8)-succinyldihydrolipoyl]-L-lysyl-[protein] + CoA. The protein operates within amino-acid degradation; L-lysine degradation via saccharopine pathway; glutaryl-CoA from L-lysine: step 6/6. Its function is as follows. E2 component of the 2-oxoglutarate dehydrogenase (OGDH) complex which catalyzes the second step in the conversion of 2-oxoglutarate to succinyl-CoA and CO(2). The polypeptide is Dihydrolipoyllysine-residue succinyltransferase component of 2-oxoglutarate dehydrogenase complex (sucB) (Buchnera aphidicola subsp. Schizaphis graminum (strain Sg)).